Consider the following 196-residue polypeptide: DNA replication complex GINS protein PSF1 (196 aa).

This sequence belongs to the GINS1/PSF1 family. In terms of assembly, component of the GINS complex which is a heterotetramer of GINS1, GINS2, GINS3 and GINS4. Forms a stable subcomplex with GINS4. GINS complex interacts with DNA primase in vitro. Component of the CMG helicase complex, a hexameric ring of related MCM2-7 subunits stabilized by CDC45 and the tetrameric GINS complex.

It is found in the nucleus. Its subcellular location is the chromosome. Functionally, required for correct functioning of the GINS complex, a complex that plays an essential role in the initiation of DNA replication, and progression of DNA replication forks. GINS complex is a core component of CDC45-MCM-GINS (CMG) helicase, the molecular machine that unwinds template DNA during replication, and around which the replisome is built. The polypeptide is DNA replication complex GINS protein PSF1 (Gins1) (Mus musculus (Mouse)).